The sequence spans 388 residues: Succinate--CoA ligase [ADP-forming] subunit beta (388 aa).

Residues 9–244 (KEILRKYGVT…LDEEDPAEIE (236 aa)) enclose the ATP-grasp domain. ATP-binding positions include lysine 46, 53–55 (GRG), glutamate 99, alanine 102, and glutamate 107. Mg(2+) is bound by residues asparagine 199 and aspartate 213. Residues asparagine 264 and 321 to 323 (GIM) each bind substrate.

It belongs to the succinate/malate CoA ligase beta subunit family. In terms of assembly, heterotetramer of two alpha and two beta subunits. Requires Mg(2+) as cofactor.

The enzyme catalyses succinate + ATP + CoA = succinyl-CoA + ADP + phosphate. It catalyses the reaction GTP + succinate + CoA = succinyl-CoA + GDP + phosphate. It participates in carbohydrate metabolism; tricarboxylic acid cycle; succinate from succinyl-CoA (ligase route): step 1/1. Succinyl-CoA synthetase functions in the citric acid cycle (TCA), coupling the hydrolysis of succinyl-CoA to the synthesis of either ATP or GTP and thus represents the only step of substrate-level phosphorylation in the TCA. The beta subunit provides nucleotide specificity of the enzyme and binds the substrate succinate, while the binding sites for coenzyme A and phosphate are found in the alpha subunit. This Herminiimonas arsenicoxydans protein is Succinate--CoA ligase [ADP-forming] subunit beta.